The following is a 179-amino-acid chain: Large ribosomal subunit protein uL6 (179 aa).

The protein belongs to the universal ribosomal protein uL6 family. Part of the 50S ribosomal subunit.

This protein binds to the 23S rRNA, and is important in its secondary structure. It is located near the subunit interface in the base of the L7/L12 stalk, and near the tRNA binding site of the peptidyltransferase center. The protein is Large ribosomal subunit protein uL6 of Prochlorococcus marinus (strain MIT 9211).